Reading from the N-terminus, the 227-residue chain is Isopentenyl-diphosphate Delta-isomerase 1 (227 aa).

A substrate-binding site is contributed by Lys-36. Positions 40 and 51 each coordinate Mg(2+). In terms of domain architecture, Nudix hydrolase spans 49–199 (LLHRAFSVFL…EIKLTPWFKI (151 aa)). The substrate site is built by Arg-70 and Lys-74. Cys-86 is an active-site residue. Ser-87 contacts substrate. Mg(2+)-binding residues include Glu-146 and Glu-148. Residue Glu-148 is part of the active site. Position 176 is an N6-acetyllysine (Lys-176). The Microbody targeting signal signature appears at 225–227 (HRL).

It belongs to the IPP isomerase type 1 family. In terms of assembly, monomer. Requires Mg(2+) as cofactor.

The protein localises to the peroxisome. It carries out the reaction isopentenyl diphosphate = dimethylallyl diphosphate. Its pathway is isoprenoid biosynthesis; dimethylallyl diphosphate biosynthesis; dimethylallyl diphosphate from isopentenyl diphosphate: step 1/1. In terms of biological role, catalyzes the 1,3-allylic rearrangement of the homoallylic substrate isopentenyl (IPP) to its highly electrophilic allylic isomer, dimethylallyl diphosphate (DMAPP). The chain is Isopentenyl-diphosphate Delta-isomerase 1 (Idi1) from Mus musculus (Mouse).